The sequence spans 523 residues: Alpha,alpha-trehalose-phosphate synthase [UDP-forming] (523 aa).

D-glucose 6-phosphate-binding residues include Tyr98 and Asp152. UDP-binding residues include Arg288 and Lys293. Positions 288 and 293 each coordinate UDP-alpha-D-glucose. Arg326 is a binding site for D-glucose 6-phosphate. 387–395 (DGMNLVSYE) contacts UDP-alpha-D-glucose. 391–395 (LVSYE) is a UDP binding site. Positions 503 to 523 (QQFNLGEQREEGRLEPGEFDD) are disordered. Residues 509–523 (EQREEGRLEPGEFDD) are compositionally biased toward basic and acidic residues.

Belongs to the glycosyltransferase 20 family.

The enzyme catalyses D-glucose 6-phosphate + UDP-alpha-D-glucose = alpha,alpha-trehalose 6-phosphate + UDP + H(+). Its pathway is carbohydrate biosynthesis. Its function is as follows. Synthase catalytic subunit of the trehalose synthase complex that catalyzes the production of trehalose from glucose-6-phosphate and UDP-alpha-D-glucose in a two step process. The disaccharide trehalose serves as a storage carbohydrate that is mobilized during conidial germination. Trehalose also serves as a protectant for cell integrity during stress. This chain is Alpha,alpha-trehalose-phosphate synthase [UDP-forming], found in Botryotinia fuckeliana (strain B05.10) (Noble rot fungus).